The primary structure comprises 154 residues: Fimbrial protein (154 aa).

Residues 1 to 6 (MNAQKG) constitute a propeptide, leader sequence. N-methylphenylalanine is present on F7. The chain crosses the membrane as a helical span at residues 7 to 29 (FTLIELMIVIAIIGILAAIALPA).

It belongs to the N-Me-Phe pilin family. As to quaternary structure, the pili are polar flexible filaments of about 5.4 nanometers diameter and 2.5 micrometers average length; they consist of only a single polypeptide chain arranged in a helical configuration of five subunits per turn in the assembled pilus.

It localises to the fimbrium. The protein localises to the membrane. The sequence is that of Fimbrial protein (tfpA) from Moraxella nonliquefaciens.